A 1802-amino-acid polypeptide reads, in one-letter code: Non-reducing polyketide synthase nscA (1802 aa).

The tract at residues 27–261 is N-terminal acylcarrier protein transacylase domain (SAT); sequence DLFRRLDQHS…PLPVYDGLCH (235 aa). The 434-residue stretch at 396–829 folds into the Ketosynthase family 3 (KS3) domain; the sequence is SSKLAIVGMA…GGNTTLLLED (434 aa). Active-site for beta-ketoacyl synthase activity residues include Cys569, His704, and His747. The interval 935-1235 is malonyl-CoA:ACP transacylase (MAT) domain; it reads FTGQGAYYHG…SASAIPSCRR (301 aa). The interval 1322–1641 is product template (PT) domain; sequence TSLVHQITAE…RLLMDRFFSP (320 aa). The tract at residues 1326 to 1462 is N-terminal hotdog fold; it reads HQITAETVEA…ATIRFEDPEA (137 aa). The PKS/mFAS DH domain maps to 1326–1636; the sequence is HQITAETVEA…FRRVPRLLMD (311 aa). The active-site Proton acceptor; for dehydratase activity is His1358. The C-terminal hotdog fold stretch occupies residues 1490–1636; it reads ASRLSKPLAY…FRRVPRLLMD (147 aa). The Proton donor; for dehydratase activity role is filled by Asp1547. Residues 1699–1729 form a disordered region; it reads LLATSSKSSTPKESPIVTPAESERAEPVDNS. The segment covering 1702-1713 has biased composition (low complexity); it reads TSSKSSTPKESP. The region spanning 1725-1802 is the Carrier domain; sequence PVDNSMTSQC…EMTAWIEEYC (78 aa). Residue Ser1762 is modified to O-(pantetheine 4'-phosphoryl)serine.

Pantetheine 4'-phosphate is required as a cofactor.

The protein operates within secondary metabolite biosynthesis. Functionally, non-reducing polyketide synthase; part of the gene cluster that mediates the biosynthesis of neosartoricin B, a prenylated anthracenone that probably exhibits T-cell antiproliferative activity, suggestive of a physiological role as an immunosuppressive agent. The non-reducing polyketide synthase nscA probably synthesizes and cyclizes the decaketide backbone. The hydrolase nscB then mediates the product release through hydrolysis followed by spontaneous decarboxylation. The prenyltransferase nscD catalyzes the addition of the dimethylallyl group to the aromatic C5. The FAD-dependent monooxygenase nscC is then responsible for the stereospecific hydroxylation at C2. Neosartoricin B can be converted into two additional compounds neosartoricins C and D. Neosartoricin C is a spirocyclic compound that is cyclized through the attack of C3 hydroxyl on C14, followed by dehydration. On the other hand, neosartoricin D is a further cyclized compound in which attack of C2 on C14 in neosartoricin C results in the formation of the acetal-containing dioxabicyclo-octanone ring. Both of these compounds are novel and possibly represent related metabolites of the gene cluster. In Trichophyton tonsurans (strain CBS 112818) (Scalp ringworm fungus), this protein is Non-reducing polyketide synthase nscA.